Here is a 237-residue protein sequence, read N- to C-terminus: Ribosomal RNA small subunit methyltransferase G (237 aa).

S-adenosyl-L-methionine is bound by residues Gly79, 130-131 (CE), and Arg147.

It belongs to the methyltransferase superfamily. RNA methyltransferase RsmG family.

The protein localises to the cytoplasm. Specifically methylates the N7 position of a guanine in 16S rRNA. The polypeptide is Ribosomal RNA small subunit methyltransferase G (Malacoplasma penetrans (strain HF-2) (Mycoplasma penetrans)).